A 320-amino-acid chain; its full sequence is Glutaconate CoA-transferase subunit A (320 aa).

The protein belongs to the 3-oxoacid CoA-transferase subunit A family. In terms of assembly, heterooctamer of four A and four B subunits.

The protein localises to the cytoplasm. The enzyme catalyses trans-glutaconate + acetyl-CoA = (2E)-glutaconyl-CoA + acetate. It participates in amino-acid degradation; L-glutamate degradation via hydroxyglutarate pathway; crotonoyl-CoA from L-glutamate: step 3/5. In terms of biological role, catalyzes the transfer of the CoA moiety from acetyl-CoA to (R)-2-hydroxyglutarate and related compounds like glutaconate. The polypeptide is Glutaconate CoA-transferase subunit A (gctA) (Acidaminococcus fermentans (strain ATCC 25085 / DSM 20731 / CCUG 9996 / CIP 106432 / VR4)).